We begin with the raw amino-acid sequence, 82 residues long: MVDINQIPTRRPFHRRRKTCPFSGANAPKIDYKDIKLLQRYISERGKIVPSRITAVSQKKQRELAKAIKRARFLGLLPYVVK.

The tract at residues 1–20 is disordered; it reads MVDINQIPTRRPFHRRRKTC.

The protein belongs to the bacterial ribosomal protein bS18 family. Part of the 30S ribosomal subunit. Forms a tight heterodimer with protein bS6.

In terms of biological role, binds as a heterodimer with protein bS6 to the central domain of the 16S rRNA, where it helps stabilize the platform of the 30S subunit. This chain is Small ribosomal subunit protein bS18, found in Brucella anthropi (strain ATCC 49188 / DSM 6882 / CCUG 24695 / JCM 21032 / LMG 3331 / NBRC 15819 / NCTC 12168 / Alc 37) (Ochrobactrum anthropi).